A 296-amino-acid chain; its full sequence is MANLNKRPDWIKVKAPNSTEYYNTKDLIKNLRLNTVCEEAACPNIGECWSKKHTTVMILGSVCTRACRFCNVKTGRPDLLDPHEPQRLAEAVQKLNLKHVVITSVDRDDLEDGGASHFAECISEIRKSSPNTTIEILTPDFLRKEGAAEIIANAKPDVFNHNVETVPSLYKTIRPGARYYNSLSLLHNIKKLSPDIFTKSGMMVGLGEEINEVVQVMDDLREAKVDFLTIGQYLQPTKNHAEVAKYVTPEEFKYLERVAKTKGFLMVSASPLTRSSYHADEDFQKLKENYQQKLVS.

[4Fe-4S] cluster contacts are provided by cysteine 37, cysteine 42, cysteine 48, cysteine 63, cysteine 67, cysteine 70, and serine 276. Positions 49-265 (WSKKHTTVMI…ERVAKTKGFL (217 aa)) constitute a Radical SAM core domain.

Belongs to the radical SAM superfamily. Lipoyl synthase family. It depends on [4Fe-4S] cluster as a cofactor.

The protein resides in the cytoplasm. It catalyses the reaction [[Fe-S] cluster scaffold protein carrying a second [4Fe-4S](2+) cluster] + N(6)-octanoyl-L-lysyl-[protein] + 2 oxidized [2Fe-2S]-[ferredoxin] + 2 S-adenosyl-L-methionine + 4 H(+) = [[Fe-S] cluster scaffold protein] + N(6)-[(R)-dihydrolipoyl]-L-lysyl-[protein] + 4 Fe(3+) + 2 hydrogen sulfide + 2 5'-deoxyadenosine + 2 L-methionine + 2 reduced [2Fe-2S]-[ferredoxin]. The protein operates within protein modification; protein lipoylation via endogenous pathway; protein N(6)-(lipoyl)lysine from octanoyl-[acyl-carrier-protein]: step 2/2. Its function is as follows. Catalyzes the radical-mediated insertion of two sulfur atoms into the C-6 and C-8 positions of the octanoyl moiety bound to the lipoyl domains of lipoate-dependent enzymes, thereby converting the octanoylated domains into lipoylated derivatives. The sequence is that of Lipoyl synthase from Rickettsia massiliae (strain Mtu5).